Consider the following 308-residue polypeptide: Adipolin (308 aa).

The first 21 residues, 1–21, serve as a signal peptide directing secretion; that stretch reads MWAWGWAAAALLWLQTAGAGA. Residues 36 to 119 form a disordered region; sequence DSPNITTSNR…PPGSPGVGVT (84 aa). N-linked (GlcNAc...) asparagine glycosylation is present at Asn39. Over residues 82–93 the composition is skewed to basic residues; sequence RKRCRGRDKKSR. Pro residues predominate over residues 99–113; sequence PGPPGPPGPPGPPGS. One can recognise a C1q domain in the interval 153-308; sequence QRLVVEAFYC…SSFSGMLLGT (156 aa).

The protein belongs to the adipolin/erythroferrone family. Homomultimer; disulfide-linked. Adipolin fC1QTNF12: homotrimer; disulfide-linked. Adipolin gC1QTNF12: homodimer; disulfide-linked. May interact with ERFE. In terms of processing, processed into Adipolin fC1QTNF12 and Adipolin gC1QTNF12 by FURIN. Insulin enhances endogenous C1QTNF12 cleavage. As to expression, widely expressed, with high expression in subcutaneous and epididymal white adipose tissues and brown adipose tissue. Expressed in adipocytes (at protein level).

Its subcellular location is the secreted. In terms of biological role, insulin-sensitizing adipocyte-secreted protein (adipokine) that regulates glucose metabolism in liver and adipose tissue. Promotes glucose uptake in adipocytes and suppresses de novo glucose production in hepatocytes via the PI3K-Akt signaling pathway. Administration lead to reduction of blood glucose. Able to attenuate inflammation in fat tissue. Its function is as follows. Acts by activating the Akt signaling in hepatocytes and adipocytes. Not able to increase insulin-stimulated glucose uptake in adipocytes. Functionally, acts by activating the MAP kinase. Increases insulin-stimulated glucose uptake in adipocytes. This chain is Adipolin (C1qtnf12), found in Mus musculus (Mouse).